An 895-amino-acid chain; its full sequence is Protein translocase subunit SecA (895 aa).

ATP contacts are provided by residues glutamine 86, 104–108, and aspartate 494; that span reads GEGKT. Low complexity-rich tracts occupy residues 838-849 and 870-882; these read AAATPPGFGAPP and GDAA…TGNR. A disordered region spans residues 838–895; it reads AAATPPGFGAPPVRQQLQYSAPTAEGDVEVHAGDAAATDADTGNRAQRRANQRQQREV.

This sequence belongs to the SecA family. As to quaternary structure, monomer and homodimer. Part of the essential Sec protein translocation apparatus which comprises SecA, SecYEG and auxiliary proteins SecDF. Other proteins may also be involved.

The protein localises to the cell membrane. It is found in the cytoplasm. The catalysed reaction is ATP + H2O + cellular proteinSide 1 = ADP + phosphate + cellular proteinSide 2.. In terms of biological role, part of the Sec protein translocase complex. Interacts with the SecYEG preprotein conducting channel. Has a central role in coupling the hydrolysis of ATP to the transfer of proteins into and across the cell membrane, serving as an ATP-driven molecular motor driving the stepwise translocation of polypeptide chains across the membrane. This is Protein translocase subunit SecA from Kineococcus radiotolerans (strain ATCC BAA-149 / DSM 14245 / SRS30216).